The chain runs to 142 residues: Putative pre-16S rRNA nuclease (142 aa).

This sequence belongs to the YqgF nuclease family.

It is found in the cytoplasm. Functionally, could be a nuclease involved in processing of the 5'-end of pre-16S rRNA. This is Putative pre-16S rRNA nuclease from Staphylococcus carnosus (strain TM300).